The chain runs to 149 residues: Probable flagellum biosynthesis repressor protein FlbT (149 aa).

Belongs to the FlbT family.

In terms of biological role, has a post-transcriptional repressor function in flagellum biogenesis. Associates with the 5'-UTR of fljK mRNA and promotes its degradation. This chain is Probable flagellum biosynthesis repressor protein FlbT, found in Rhizobium johnstonii (strain DSM 114642 / LMG 32736 / 3841) (Rhizobium leguminosarum bv. viciae).